A 142-amino-acid chain; its full sequence is Large ribosomal subunit protein uL13 (142 aa).

This sequence belongs to the universal ribosomal protein uL13 family. As to quaternary structure, part of the 50S ribosomal subunit.

This protein is one of the early assembly proteins of the 50S ribosomal subunit, although it is not seen to bind rRNA by itself. It is important during the early stages of 50S assembly. This is Large ribosomal subunit protein uL13 from Pseudomonas fluorescens (strain Pf0-1).